The following is a 691-amino-acid chain: MEIGISKYRNIGIMAHIDAGKTTTTERILFYTGKQNRIGEVHDGAASMDWMEQEKERGITITSAATTCFWNDHRVNIIDTPGHVDFTIEVERSLRVLDGAVAVFDGVAGVEPQSETVWRQADKYSVPRICFVNKMDRIGANFYRCVDMIKTKLGAAPLVIHLPIGSEKDFKGIIDLISMKAIIWQEETLGAKFSYEDIPSDLLDKAQEYRNLLLDAAAEMDDEAMNTYFESNDLPVDLLKKCVRNGTIKGKFVPVLCGSAFKNKGVQPLLDGVVDFLPSPIDVDVIVGIDPKDSEKKIEVKPSEKEKFVALAFKVMTDKFVGSLTFIRIYSGKLKSKSTVSNALKNETEGIGRMLLMHANNREDITEARAGDIVALVGLKKTTTGDTLCSVDFPILLERMEFPEPVIEIAVEPKTTSDQEKLGIALNRLVAEDPSLRMSVNAESGQTILKGMGELHLEIIVDRMKREFNVEANVGAPQVAYRETITKSVEIDYTHKKQSGGAGQFAKVKIKFEPLEPGSGFQFESKIVGGAIPKEYIPGVENGLELIKEGGIISGFPLIDFKATLLDGAFHEVDSSPLAFELAAKGAFKEMANKAGPKMLEPIMKVEIITPEEYMGDVMGDINSRRGNVADMLDLGNNSKIITASVPLANMFGYINVLRSMSQGRAQYSMHFSCYEQVPQYVVDELKLEYN.

Residues 6–281 (SKYRNIGIMA…GVVDFLPSPI (276 aa)) form the tr-type G domain. GTP-binding positions include 15-22 (AHIDAGKT), 79-83 (DTPGH), and 133-136 (NKMD).

This sequence belongs to the TRAFAC class translation factor GTPase superfamily. Classic translation factor GTPase family. EF-G/EF-2 subfamily.

It localises to the cytoplasm. Catalyzes the GTP-dependent ribosomal translocation step during translation elongation. During this step, the ribosome changes from the pre-translocational (PRE) to the post-translocational (POST) state as the newly formed A-site-bound peptidyl-tRNA and P-site-bound deacylated tRNA move to the P and E sites, respectively. Catalyzes the coordinated movement of the two tRNA molecules, the mRNA and conformational changes in the ribosome. In Wolbachia pipientis wMel, this protein is Elongation factor G.